Here is a 258-residue protein sequence, read N- to C-terminus: UPF0246 protein YaaA (258 aa).

The protein belongs to the UPF0246 family.

This Shigella sonnei (strain Ss046) protein is UPF0246 protein YaaA.